Consider the following 493-residue polypeptide: Cobyric acid synthase (493 aa).

In terms of domain architecture, GATase cobBQ-type spans 260 to 427; the sequence is RLSVAAIRLP…RHGYLQDDPA (168 aa). The active site involves histidine 419.

This sequence belongs to the CobB/CobQ family. CobQ subfamily.

Its pathway is cofactor biosynthesis; adenosylcobalamin biosynthesis. In terms of biological role, catalyzes amidations at positions B, D, E, and G on adenosylcobyrinic A,C-diamide. NH(2) groups are provided by glutamine, and one molecule of ATP is hydrogenolyzed for each amidation. The sequence is that of Cobyric acid synthase from Corynebacterium efficiens (strain DSM 44549 / YS-314 / AJ 12310 / JCM 11189 / NBRC 100395).